A 494-amino-acid chain; its full sequence is Glycerol kinase (494 aa).

Thr12 lines the ADP pocket. Thr12, Thr13, and Ser14 together coordinate ATP. Thr12 serves as a coordination point for sn-glycerol 3-phosphate. Arg16 contributes to the ADP binding site. Residues Arg82, Glu83, Tyr134, and Asp241 each coordinate sn-glycerol 3-phosphate. Residues Arg82, Glu83, Tyr134, Asp241, and Gln242 each coordinate glycerol. ADP contacts are provided by Thr263 and Gly306. Residues Thr263, Gly306, Gln310, and Gly407 each contribute to the ATP site. An ADP-binding site is contributed by Gly407.

This sequence belongs to the FGGY kinase family.

It carries out the reaction glycerol + ATP = sn-glycerol 3-phosphate + ADP + H(+). The protein operates within polyol metabolism; glycerol degradation via glycerol kinase pathway; sn-glycerol 3-phosphate from glycerol: step 1/1. With respect to regulation, inhibited by fructose 1,6-bisphosphate (FBP). In terms of biological role, key enzyme in the regulation of glycerol uptake and metabolism. Catalyzes the phosphorylation of glycerol to yield sn-glycerol 3-phosphate. This is Glycerol kinase from Brachyspira hyodysenteriae (strain ATCC 49526 / WA1).